A 233-amino-acid chain; its full sequence is Phosducin-like protein C2A9.09 (233 aa).

Residues 58-212 (EDEEDDEFLQ…DIAALKDPQN (155 aa)) enclose the Phosducin domain. The thioredoxin fold stretch occupies residues 86 to 233 (FGSVYPISKP…VNDDLDDDFD (148 aa)). The segment at 207 to 233 (LKDPQNAEDELGKRDSSVNDDLDDDFD) is disordered. Phosphoserine is present on residues Ser222 and Ser223. Positions 224-233 (VNDDLDDDFD) are enriched in acidic residues.

Belongs to the phosducin family.

The chain is Phosducin-like protein C2A9.09 from Schizosaccharomyces pombe (strain 972 / ATCC 24843) (Fission yeast).